Here is a 2556-residue protein sequence, read N- to C-terminus: Ubiquitin carboxyl-terminal hydrolase 9Y (2556 aa).

Polar residues predominate over residues 1–33 (MTITTRGSPVGENESQGQTSDGQPQPSFQQNQI). The disordered stretch occupies residues 1-68 (MTITTRGSPV…QHEEEDPSFP (68 aa)). Positions 34 to 44 (SSSDSSNETSP) are enriched in low complexity. Position 587 is a phosphoserine (serine 587). Phosphothreonine is present on threonine 589. The interval 971-999 (NMPSSPDSSSDSSAGPPGNHSHNNYRDVS) is disordered. The span at 973–983 (PSSPDSSSDSS) shows a compositional bias: low complexity. Positions 1559–1958 (VGLKNAGATC…NAYILFYERM (400 aa)) constitute a USP domain. The Nucleophile role is filled by cysteine 1568. Cysteine 1729, histidine 1731, cysteine 1773, and cysteine 1776 together coordinate Zn(2+). Residue histidine 1881 is the Proton acceptor of the active site. Serine 2447 is modified (phosphoserine). The disordered stretch occupies residues 2513–2556 (QNYVPEQPFSGPASHHLNNPQKNDKPQETHESNEEISSCLIKDQ). Over residues 2534 to 2545 (KNDKPQETHESN) the composition is skewed to basic and acidic residues. Serine 2549 is subject to Phosphoserine.

This sequence belongs to the peptidase C19 family.

The catalysed reaction is Thiol-dependent hydrolysis of ester, thioester, amide, peptide and isopeptide bonds formed by the C-terminal Gly of ubiquitin (a 76-residue protein attached to proteins as an intracellular targeting signal).. Its pathway is protein modification; protein ubiquitination. Functionally, deubiquitinase that mediates deubiquitination of target proteins. May stabilize target proteins that are important for male germ cell development. The polypeptide is Ubiquitin carboxyl-terminal hydrolase 9Y (Mus musculus (Mouse)).